We begin with the raw amino-acid sequence, 216 residues long: Octanoyltransferase (216 aa).

A BPL/LPL catalytic domain is found at 35 to 213; it reads NSNPDFIWIG…TIEEEFNFDF (179 aa). Residues 77-84, 144-146, and 157-159 each bind substrate; these read RGGEVTCH, SIG, and GFS. The active-site Acyl-thioester intermediate is Cys-175.

It belongs to the LipB family.

It localises to the cytoplasm. It catalyses the reaction octanoyl-[ACP] + L-lysyl-[protein] = N(6)-octanoyl-L-lysyl-[protein] + holo-[ACP] + H(+). Its pathway is protein modification; protein lipoylation via endogenous pathway; protein N(6)-(lipoyl)lysine from octanoyl-[acyl-carrier-protein]: step 1/2. Its function is as follows. Catalyzes the transfer of endogenously produced octanoic acid from octanoyl-acyl-carrier-protein onto the lipoyl domains of lipoate-dependent enzymes. Lipoyl-ACP can also act as a substrate although octanoyl-ACP is likely to be the physiological substrate. The chain is Octanoyltransferase from Prochlorococcus marinus (strain MIT 9301).